Reading from the N-terminus, the 205-residue chain is dITP/XTP pyrophosphatase (205 aa).

10–15 (TKNEGK) contacts substrate. Glu-44 and Asp-73 together coordinate Mg(2+). Asp-73 acts as the Proton acceptor in catalysis. Substrate-binding positions include Ser-74, 156–159 (FGYD), Lys-179, and 184–185 (HR).

It belongs to the HAM1 NTPase family. In terms of assembly, homodimer. Mg(2+) is required as a cofactor.

It carries out the reaction XTP + H2O = XMP + diphosphate + H(+). The enzyme catalyses dITP + H2O = dIMP + diphosphate + H(+). It catalyses the reaction ITP + H2O = IMP + diphosphate + H(+). In terms of biological role, pyrophosphatase that catalyzes the hydrolysis of nucleoside triphosphates to their monophosphate derivatives, with a high preference for the non-canonical purine nucleotides XTP (xanthosine triphosphate), dITP (deoxyinosine triphosphate) and ITP. Seems to function as a house-cleaning enzyme that removes non-canonical purine nucleotides from the nucleotide pool, thus preventing their incorporation into DNA/RNA and avoiding chromosomal lesions. The protein is dITP/XTP pyrophosphatase of Dictyoglomus thermophilum (strain ATCC 35947 / DSM 3960 / H-6-12).